Here is a 428-residue protein sequence, read N- to C-terminus: Divalent metal cation transporter MntH (428 aa).

11 helical membrane-spanning segments follow: residues 33–53, 60–80, 114–134, 136–156, 171–191, 210–230, 258–278, 299–319, 334–356, 365–385, and 406–426; these read WYLL…GNVA, AQFG…AALV, QAEI…AIAL, IMFN…SLLL, VITA…FVVT, SVLL…VYLH, VGLA…VAAL, TLGA…GLAS, LLHW…LAIL, TLVL…LPLV, and VGWV…YLTV.

The protein belongs to the NRAMP family.

It is found in the cell membrane. In terms of biological role, h(+)-stimulated, divalent metal cation uptake system. Transports zinc and iron. Can also interact with manganese and copper. This Mycobacterium tuberculosis (strain CDC 1551 / Oshkosh) protein is Divalent metal cation transporter MntH.